We begin with the raw amino-acid sequence, 330 residues long: PDZ and LIM domain protein 4 (330 aa).

In terms of domain architecture, PDZ spans 8–84 (RGPSPWGFRL…QLLLSVSRAE (77 aa)). Disordered stretches follow at residues 106–152 (EPEP…SSSA) and 163–182 (LHIS…RNRN). Positions 139–152 (QHPQPSRPHASSSA) are enriched in polar residues. In terms of domain architecture, LIM zinc-binding spans 255–305 (CTRCGNGIVGTIVKARDKLYHPECFMCDDCGLNLKQRGYFFIEEQLYCETH).

Interacts (via LIM domain) with PTPN13. Interacts (via PDZ domain) with ACTN1.

It localises to the cytoplasm. The protein resides in the cytoskeleton. It is found in the cell projection. The protein localises to the dendritic spine. Its subcellular location is the early endosome membrane. It localises to the recycling endosome membrane. The protein resides in the nucleus. It is found in the perinuclear region. The protein localises to the lamellipodium. Its subcellular location is the synapse. It localises to the synaptosome. Its function is as follows. Suppresses SRC activation by recognizing and binding to active SRC and facilitating PTPN13-mediated dephosphorylation of SRC 'Tyr-419' leading to its inactivation. Inactivated SRC dissociates from this protein allowing the initiation of a new SRC inactivation cycle. Involved in reorganization of the actin cytoskeleton. In nonmuscle cells, binds to ACTN1 (alpha-actinin-1), increases the affinity of ACTN1 to F-actin (filamentous actin), and promotes formation of actin stress fibers. Involved in regulation of the synaptic AMPA receptor transport in dendritic spines of hippocampal pyramidal neurons directing the receptors toward an insertion at the postsynaptic membrane. Links endosomal surface-internalized GRIA1-containing AMPA receptors to the alpha-actinin/actin cytoskeleton. Increases AMPA receptor-mediated excitatory postsynaptic currents in neurons. This is PDZ and LIM domain protein 4 (PDLIM4) from Gallus gallus (Chicken).